We begin with the raw amino-acid sequence, 645 residues long: Rho GTPase-activating protein 25 (645 aa).

In terms of domain architecture, PH spans 46–151 (RPIKMGWLKK…WVKFLRRVAG (106 aa)). The Rho-GAP domain maps to 159–353 (QRLDETVAYE…MMIRDHEVLF (195 aa)). Disordered stretches follow at residues 355-444 (KSKD…QTLP) and 469-550 (FWSP…EEEI). Phosphoserine occurs at positions 362 and 395. A compositionally biased stretch (low complexity) spans 393–409 (TDSFSSMTSDSDTTSPT). At Thr406 the chain carries Phosphothreonine. Residues 420-431 (DSSKVPREKPGD) are compositionally biased toward basic and acidic residues. Polar residues predominate over residues 487–504 (SQDLRQLSDSQRTSTYDN). Ser536 carries the post-translational modification Phosphoserine. A coiled-coil region spans residues 541-644 (GKKNSGEEEI…VKSMKEPKTE (104 aa)).

Functionally, GTPase activator for the Rho-type GTPases by converting them to an inactive GDP-bound state. The polypeptide is Rho GTPase-activating protein 25 (ARHGAP25) (Homo sapiens (Human)).